The sequence spans 146 residues: Large ribosomal subunit protein uL15 (146 aa).

A disordered region spans residues 1 to 57 (MDLSNLKAAEGSVHSDNFRRGRGHGSGNGKTAGKGHKGQKARSGAPRPGFEGGQMPL).

This sequence belongs to the universal ribosomal protein uL15 family. As to quaternary structure, part of the 50S ribosomal subunit.

Its function is as follows. Binds to the 23S rRNA. The protein is Large ribosomal subunit protein uL15 of Agathobacter rectalis (strain ATCC 33656 / DSM 3377 / JCM 17463 / KCTC 5835 / VPI 0990) (Eubacterium rectale).